We begin with the raw amino-acid sequence, 88 residues long: Small ribosomal subunit protein uS17 (88 aa).

It belongs to the universal ribosomal protein uS17 family. As to quaternary structure, part of the 30S ribosomal subunit.

Its function is as follows. One of the primary rRNA binding proteins, it binds specifically to the 5'-end of 16S ribosomal RNA. This chain is Small ribosomal subunit protein uS17, found in Prochlorococcus marinus (strain MIT 9301).